The chain runs to 86 residues: Conidiation-specific protein 10 (86 aa).

A compositionally biased stretch (polar residues) spans 1-11 (MAGTGNDNPGN). The segment at 1–86 (MAGTGNDNPG…SGGTGADDDE (86 aa)) is disordered. Residues 49–58 (SKGGKASSGS) show a composition bias toward low complexity. A compositionally biased stretch (basic and acidic residues) spans 62-71 (GSEKAREAGR). Residues 75–86 (KASGGTGADDDE) show a composition bias toward gly residues.

The protein belongs to the con-10 family.

In Neurospora crassa (strain ATCC 24698 / 74-OR23-1A / CBS 708.71 / DSM 1257 / FGSC 987), this protein is Conidiation-specific protein 10 (con-10).